The primary structure comprises 457 residues: MQTIDFEKFSQYSKPGPRYTSYPTAVEFNENFNEESLKTAFFNHDNLKNPMPLSLYTHLPFCRSACYFCACSVIYTSLEEKKIRYISYLKKELALLKNAMDTNREVAQFHYGGGTPTFFSPIQLDEITQSIQEVFPNFSKDIEMSCEIDPRHFTKEHMQTLFDRGFNRLSFGVQDFDFEVQKAIHRIQPFEMVQESVKLARDYGIKSINFDLIYGLPNQTKEGFLKTLEWVLKLDPDRLAVFNYAHVPWVKKTMRKIDETLLPSLRDKLEILESLISFLEKANYQMIGMDHFAKSDNELYLALQKAELRRNFQGYTTKKFTQTIGIGVTSIGEGGDYYTQNYKDLHHYEKALDLGHLPVERGVALSQEDVLRKEVIMQMMSNLKLDYSKIEEKFSVDFKAHFKKELEKLKPYEEAGLLSFNSKGFEMTKTGGMLVRNMAMEFDAYLRGGEKHFSKTL.

Positions leucine 47–leucine 279 constitute a Radical SAM core domain. An S-adenosyl-L-methionine-binding site is contributed by tyrosine 56. 2 residues coordinate [4Fe-4S] cluster: cysteine 62 and cysteine 66. Phenylalanine 68 serves as a coordination point for S-adenosyl-L-methionine. Residue cysteine 69 coordinates [4Fe-4S] cluster. Residues glycine 113, glycine 114–threonine 115, glutamate 147, glutamine 174, arginine 186, aspartate 211, alanine 245, and isoleucine 331 each bind S-adenosyl-L-methionine.

Belongs to the anaerobic coproporphyrinogen-III oxidase family. As to quaternary structure, monomer. The cofactor is [4Fe-4S] cluster.

Its subcellular location is the cytoplasm. It catalyses the reaction coproporphyrinogen III + 2 S-adenosyl-L-methionine = protoporphyrinogen IX + 2 5'-deoxyadenosine + 2 L-methionine + 2 CO2. Its pathway is porphyrin-containing compound metabolism; protoporphyrin-IX biosynthesis; protoporphyrinogen-IX from coproporphyrinogen-III (AdoMet route): step 1/1. Involved in the heme biosynthesis. Catalyzes the anaerobic oxidative decarboxylation of propionate groups of rings A and B of coproporphyrinogen III to yield the vinyl groups in protoporphyrinogen IX. The chain is Oxygen-independent coproporphyrinogen III oxidase (hemN) from Helicobacter pylori (strain ATCC 700392 / 26695) (Campylobacter pylori).